Here is a 271-residue protein sequence, read N- to C-terminus: Indole-3-glycerol phosphate synthase (271 aa).

It belongs to the TrpC family.

It catalyses the reaction 1-(2-carboxyphenylamino)-1-deoxy-D-ribulose 5-phosphate + H(+) = (1S,2R)-1-C-(indol-3-yl)glycerol 3-phosphate + CO2 + H2O. It functions in the pathway amino-acid biosynthesis; L-tryptophan biosynthesis; L-tryptophan from chorismate: step 4/5. In Lachnoclostridium phytofermentans (strain ATCC 700394 / DSM 18823 / ISDg) (Clostridium phytofermentans), this protein is Indole-3-glycerol phosphate synthase.